We begin with the raw amino-acid sequence, 738 residues long: Integrin beta-2-like protein (738 aa).

The signal sequence occupies residues 1–22 (MLGQCTLLPVLAGLLSLESALS). Over 23 to 671 (QLCTKDNVST…LVCAEISNTT (649 aa)) the chain is Extracellular. Residues 24–74 (LCTKDNVSTCQDCIRSGPSCAWCQKLNFTGRGEPDSVRCDTPEQLLLKGCT) form the PSI domain. 23 cysteine pairs are disulfide-bonded: Cys25–Cys419, Cys33–Cys43, Cys36–Cys73, Cys46–Cys62, Cys218–Cys258, Cys358–Cys372, Cys421–Cys439, Cys431–Cys442, Cys444–Cys453, Cys455–Cys486, Cys469–Cys484, Cys478–Cys489, Cys491–Cys506, Cys508–Cys531, Cys513–Cys529, Cys521–Cys534, Cys536–Cys545, Cys547–Cys570, Cys554–Cys568, Cys562–Cys573, Cys575–Cys584, Cys594–Cys603, and Cys600–Cys664. Asn29 is a glycosylation site (N-linked (GlcNAc...) asparagine). Asn50, Asn102, Asn173, Asn226, Asn252, Asn342, Asn360, and Asn386 each carry an N-linked (GlcNAc...) asparagine glycan. A VWFA domain is found at 126-329 (SVDLYFLMGL…DSSNVAQLIR (204 aa)). I-EGF domains lie at 421–454 (CQEQSQHHSLCGGKGAMECGICRCNSGYAGKNCE), 455–507 (CQTQ…QYCE), 508–546 (CNNVNCERYDGQVCGGPERGHCSCGRCFCRYGFVGSACQ), and 547–585 (CRMSTSGCLNNRMVECSGHGRCYCNRCLCDPGYQPPLCE). N-linked (GlcNAc...) asparagine glycosylation occurs at Asn473. Asn627 and Asn669 each carry an N-linked (GlcNAc...) asparagine glycan. The chain crosses the membrane as a helical span at residues 672–692 (ILLGVIVGVLLAVIFLLVYCM). Residues 693–738 (VYLKGTQKAAKLPRKGGAQSTLAQQPHFQEPHHVEPVWNQERQGTQ) lie on the Cytoplasmic side of the membrane. The interval 709–738 (GAQSTLAQQPHFQEPHHVEPVWNQERQGTQ) is disordered. Residues 710-719 (AQSTLAQQPH) show a composition bias toward polar residues.

This sequence belongs to the integrin beta chain family. In terms of assembly, monomer and homodimer. Unlike integrin beta chains, no alpha chain partner has yet been found. Post-translationally, N-glycosylated. Expressed predominantly in maturing and mature neutrophils.

Its subcellular location is the cell membrane. Its function is as follows. During inflammatory stimulation, plays a role in retaining Cxcl13-expressing cells at the site of the inflammatory response. The chain is Integrin beta-2-like protein from Mus musculus (Mouse).